A 38-amino-acid chain; its full sequence is Large ribosomal subunit protein bL36 (38 aa).

Belongs to the bacterial ribosomal protein bL36 family.

The protein is Large ribosomal subunit protein bL36 (rpmJ) of Streptococcus pneumoniae serotype 4 (strain ATCC BAA-334 / TIGR4).